The primary structure comprises 507 residues: Variant surface glycoprotein ILTAT 1.25 (507 aa).

Positions 1–21 (MQSQQQPVFISIILLAINTDA) are cleaved as a signal peptide. Basic and acidic residues predominate over residues 83–95 (EPEAAPKESRSDE). Positions 83 to 102 (EPEAAPKESRSDETPEACKA) are disordered. N-linked (GlcNAc...) asparagine glycosylation is found at Asn-141 and Asn-371. Over residues 384 to 395 (PTKQPPAKAAAA) the composition is skewed to low complexity. Positions 384-474 (PTKQPPAKAA…KKEEECKSPN (91 aa)) are disordered. Residues 396 to 420 (PEKKSNPQKDCNKNTKKRDCKEGDG) are compositionally biased toward basic and acidic residues. Low complexity predominate over residues 444–455 (SAAGAGDAGASD). Residues 456 to 474 (TEAKKCSDKKKEEECKSPN) show a composition bias toward basic and acidic residues. Asp-484 is lipidated: GPI-anchor amidated aspartate. Residues 485 to 507 (SSILANKQFALSVASAAFVALLF) constitute a propeptide, removed in mature form.

It localises to the cell membrane. Functionally, VSG forms a coat on the surface of the parasite. The trypanosome evades the immune response of the host by expressing a series of antigenically distinct VSGs from an estimated 1000 VSG genes. The chain is Variant surface glycoprotein ILTAT 1.25 from Trypanosoma brucei brucei.